A 643-amino-acid polypeptide reads, in one-letter code: Phosphomethylpyrimidine synthase (643 aa).

Substrate contacts are provided by residues N248, M277, Y306, H342, 362-364 (SRG), 403-406 (DGLR), and E442. H446 serves as a coordination point for Zn(2+). Y469 serves as a coordination point for substrate. A Zn(2+)-binding site is contributed by H510. Residues C590, C593, and C598 each contribute to the [4Fe-4S] cluster site.

This sequence belongs to the ThiC family. In terms of assembly, homodimer. [4Fe-4S] cluster is required as a cofactor.

The enzyme catalyses 5-amino-1-(5-phospho-beta-D-ribosyl)imidazole + S-adenosyl-L-methionine = 4-amino-2-methyl-5-(phosphooxymethyl)pyrimidine + CO + 5'-deoxyadenosine + formate + L-methionine + 3 H(+). It functions in the pathway cofactor biosynthesis; thiamine diphosphate biosynthesis. Catalyzes the synthesis of the hydroxymethylpyrimidine phosphate (HMP-P) moiety of thiamine from aminoimidazole ribotide (AIR) in a radical S-adenosyl-L-methionine (SAM)-dependent reaction. The chain is Phosphomethylpyrimidine synthase from Burkholderia lata (strain ATCC 17760 / DSM 23089 / LMG 22485 / NCIMB 9086 / R18194 / 383).